A 74-amino-acid polypeptide reads, in one-letter code: Cyclin-dependent kinases regulatory subunit (74 aa).

It belongs to the CKS family. Forms a homohexamer that can probably bind six kinase subunits.

In terms of biological role, binds to the catalytic subunit of the cyclin dependent kinases Cdk1 and Cdk2, and is essential for their biological function. The protein is Cyclin-dependent kinases regulatory subunit (Cks30A) of Drosophila melanogaster (Fruit fly).